Reading from the N-terminus, the 124-residue chain is UPF0102 protein HCH_05895 (124 aa).

This sequence belongs to the UPF0102 family.

The polypeptide is UPF0102 protein HCH_05895 (Hahella chejuensis (strain KCTC 2396)).